Reading from the N-terminus, the 438-residue chain is MALLPQEVIRKKRDGGRLDRAEIADFVSGLADGSISEGQVAAFAMATWFSGMNRDECVALTLAMRDSGDILDWSEFGRPIVDKHSTGGVGDNVSLMLAPIVAACGPNVPMISGRGLGHTGGTLDKLESIPGYNIQPSPELFRQIVDEVGCAIIGQTANLAPADKRLYAIRDVTATVDSVPLITASILSKKLAAGLQSLVLDVKLGNGSFMTDARATKTLARSLVDVANGAGVNTLALITDMNEPLADAVGNALEVENCLAYLRGEKSGTRLDQVVMAFAAEMLVAARMAAHPAAGEAMARQALESGDAMERFALMVHRLGGPADFVDRSEAYLEKAPAVVIVPANRDGYLAACETRELGMAVIALGGGRTRPDDRIDHRVGLAGLKPLGTKVERGEPIAFVHAADRQQAEAVRDRIAGFYAIADERPASRPVIVSRIT.

This sequence belongs to the thymidine/pyrimidine-nucleoside phosphorylase family. As to quaternary structure, homodimer.

It carries out the reaction thymidine + phosphate = 2-deoxy-alpha-D-ribose 1-phosphate + thymine. Its pathway is pyrimidine metabolism; dTMP biosynthesis via salvage pathway; dTMP from thymine: step 1/2. Its function is as follows. The enzymes which catalyze the reversible phosphorolysis of pyrimidine nucleosides are involved in the degradation of these compounds and in their utilization as carbon and energy sources, or in the rescue of pyrimidine bases for nucleotide synthesis. This chain is Thymidine phosphorylase, found in Sinorhizobium fredii (strain NBRC 101917 / NGR234).